Reading from the N-terminus, the 341-residue chain is Platelet-activating factor receptor (341 aa).

Residues 1-16 (MEHNGSFRVDSEFRYT) are Extracellular-facing. The N-linked (GlcNAc...) asparagine glycan is linked to asparagine 4. A helical transmembrane segment spans residues 17 to 38 (LFPIVYSVIFILGVVANGYVLW). Residues 39 to 54 (VFANLYPSKKLNEIKI) are Cytoplasmic-facing. Residues 55–74 (FMVNLTMADLLFLITLPLWI) traverse the membrane as a helical segment. The Extracellular segment spans residues 75-91 (VYYYNEGDWILPNFLCN). A disulfide bridge links cysteine 90 with cysteine 173. A helical transmembrane segment spans residues 92–113 (VAGCLFFINTYCSVAFLGVITY). Topologically, residues 114–133 (NRYQAVAYPIKTAQATTRKR) are cytoplasmic. The helical transmembrane segment at 134 to 155 (GISLSLIIWVSIVATASYFLAT) threads the bilayer. Over 156-184 (DSTNLVPNKDGSGNITRCFEHYEPYSVPI) the chain is Extracellular. An N-linked (GlcNAc...) asparagine glycan is attached at asparagine 169. Residues 185–205 (LVVHVFIAFCFFLVFFLIFYC) traverse the membrane as a helical segment. Topologically, residues 206 to 233 (NLVIIHTLLTQPMRQQRKAGVKRRALWM) are cytoplasmic. A helical transmembrane segment spans residues 234–254 (VCTVLAVFIICFVPHHVVQLP). Residues 255 to 275 (WTLAELGYQTNFHQAINDAHQ) lie on the Extracellular side of the membrane. The chain crosses the membrane as a helical span at residues 276-295 (ITLCLLSTNCVLDPVIYCFL). Residues 296–341 (TKKFRKHLSEKFYSMRSSRKCSRATSDTCTEVIVPANQTPIVSLKN) are Cytoplasmic-facing.

Belongs to the G-protein coupled receptor 1 family. Interacts with ARRB1. In terms of tissue distribution, found in a range of organs. Expressed most strongly in spleen, followed by skeletal muscle, lung and small intestine. Expressed at moderate levels in the heart. Expressed at relatively low levels in the brain, liver and kidney.

It localises to the cell membrane. Its function is as follows. Receptor for platelet activating factor, a chemotactic phospholipid mediator that possesses potent inflammatory, smooth-muscle contractile and hypotensive activity. Seems to mediate its action via a G protein that activates a phosphatidylinositol-calcium second messenger system. This is Platelet-activating factor receptor (Ptafr) from Mus musculus (Mouse).